The chain runs to 233 residues: Protein lin-7 homolog A (233 aa).

The L27 domain maps to 25 to 80 (LDRDVARAIELLEKLQESGEVPVHKLQSLKKVLQSEFCTAIREVYQYMHETITVNG). One can recognise a PDZ domain in the interval 108 to 190 (VVELPKTDEG…SVKLVVRYTP (83 aa)).

The protein belongs to the lin-7 family. In terms of assembly, forms a complex with CASK and CASKIN1. Component of the brain-specific heterotrimeric complex (LIN-10-LIN-2-LIN-7 complex) composed of at least APBA1, CASK, and LIN7, which associates with the motor protein KIF17 to transport vesicles along microtubules. Can also interact with other modular proteins containing protein-protein interaction domains like PALS1, PALS2, MPP7, DLG1, DLG2 and DLG3 through its L27 domain. Interacts with DLG4, GRIN2B and MARCHF11 as well as CDH1 and CTNNB1, the channels KCNJ12/Kir2.2, KCNJ4/Kir2.3 and probably KCNJ2/Kir2.1 and SLC6A12/BGT-1 via its PDZ domain. The association of LIN7A with cadherin and beta-catenin is calcium-dependent, occurs at synaptic junctions and requires the actin cytoskeleton. Interacts with EGFR, ERBB2, ERBB3 and ERBB4 with both PDZ and KID domains. Associates with KIF17 via APBA1. Interacts with HTR4. Forms a tripartite complex composed of DLG1, MPP7 and LIN7 (LIN7A or LIN7C).

The protein resides in the cell membrane. It is found in the basolateral cell membrane. Its subcellular location is the cell junction. The protein localises to the postsynaptic density membrane. It localises to the tight junction. Its function is as follows. Plays a role in establishing and maintaining the asymmetric distribution of channels and receptors at the plasma membrane of polarized cells. Forms membrane-associated multiprotein complexes that may regulate delivery and recycling of proteins to the correct membrane domains. The tripartite complex composed of LIN7 (LIN7A, LIN7B or LIN7C), CASK and APBA1 associates with the motor protein KIF17 to transport vesicles containing N-methyl-D-aspartate (NMDA) receptor subunit NR2B along microtubules. This complex may have the potential to couple synaptic vesicle exocytosis to cell adhesion in brain. Ensures the proper localization of GRIN2B (subunit 2B of the NMDA receptor) to neuronal postsynaptic density and may function in localizing synaptic vesicles at synapses where it is recruited by beta-catenin and cadherin. Required to localize Kir2 channels, GABA transporter (SLC6A12) and EGFR/ERBB1, ERBB2, ERBB3 and ERBB4 to the basolateral membrane of epithelial cells. The protein is Protein lin-7 homolog A (LIN7A) of Bos taurus (Bovine).